The chain runs to 649 residues: Serine/threonine kinase-like domain-containing protein STKLD1 (649 aa).

A compositionally biased stretch (basic and acidic residues) spans Met1 to Gln13. Positions Met1–Glu23 are disordered. Residues Tyr28–Leu379 enclose the Protein kinase domain. Residues Leu34 to Asn42 and Lys57 contribute to the ATP site. The tract at residues Phe621–Gly640 is disordered.

It belongs to the protein kinase superfamily. Ser/Thr protein kinase family. STKL subfamily.

The sequence is that of Serine/threonine kinase-like domain-containing protein STKLD1 (STKLD1) from Macaca fascicularis (Crab-eating macaque).